A 620-amino-acid polypeptide reads, in one-letter code: NADPH-dependent diflavin oxidoreductase 1 (620 aa).

One can recognise a Flavodoxin-like domain in the interval 6–168 (IAILYGSETG…VYSEFEKRVL (163 aa)). Residues 12-17 (SETGTA), 59-62 (STTG), and 106-115 (LGDSSYSKFN) contribute to the FMN site. Residues 222–475 (SSVKYGTVVT…LLPAGKQDRP (254 aa)) form the FAD-binding FR-type domain. FAD is bound by residues Arg380, 410–413 (RFFS), and 442–445 (GLCT). 535-536 (SR) is a binding site for NADP(+). Residue Trp620 coordinates FAD.

This sequence belongs to the NADPH-dependent diflavin oxidoreductase NDOR1 family. It in the N-terminal section; belongs to the flavodoxin family. In the C-terminal section; belongs to the flavoprotein pyridine nucleotide cytochrome reductase family. Interacts with DRE2; as part of the cytosolic iron-sulfur (Fe-S) protein assembly (CIA) machinery. The cofactor is FAD. It depends on FMN as a cofactor.

It is found in the cytoplasm. Its subcellular location is the mitochondrion. The enzyme catalyses 2 oxidized [2Fe-2S]-[protein] + NADPH = 2 reduced [2Fe-2S]-[protein] + NADP(+) + H(+). Functionally, NADPH-dependent reductase which is a central component of the cytosolic iron-sulfur (Fe-S) protein assembly (CIA) machinery. Transfers electrons from NADPH via its FAD and FMN prosthetic groups to the [2Fe-2S] cluster of DRE2, another key component of the CIA machinery. In turn, this reduced cluster provides electrons for assembly of cytosolic iron-sulfur cluster proteins. Positively controls H(2)O(2)-induced cell death. This chain is NADPH-dependent diflavin oxidoreductase 1, found in Eremothecium gossypii (strain ATCC 10895 / CBS 109.51 / FGSC 9923 / NRRL Y-1056) (Yeast).